Consider the following 485-residue polypeptide: Homeobox protein unplugged (485 aa).

Disordered stretches follow at residues 1–65, 114–157, and 212–325; these read MERP…QEQE, PAGH…DTRF, and GMAQ…RRTA. Residues 54–64 show a composition bias toward acidic residues; sequence RDQEQEAEQEQ. The span at 114 to 128 shows a compositional bias: low complexity; that stretch reads PAGHPAAQQPQAQAQ. Composition is skewed to polar residues over residues 223–234 and 254–267; these read QAHSSPAKSGSH and DSCSDISLTMSPRN. Residues 284-293 show a composition bias toward acidic residues; sequence DSEDCSDDEG. A compositionally biased stretch (low complexity) spans 308-317; that stretch reads SQGNGSSSNS. Positions 319–378 form a DNA-binding region, homeobox; that stretch reads SRRRRTAFTSEQLLELEREFHAKKYLSLTERSQIATSLKLSEVQVKIWFQNRRAKWKRVK.

Expressed in the neuroectodermal and mesectodermal cells at the ventral midline of stage 8 embryos, Subsequently, expression domains in the CNS widen and have their most anterior border in the posterior deutocerebrum. Oc/otd and unpg are mutual repressors at the interface of their brain-specific expression domains. Expression fades during germ band retraction and is then restricted to subset of cells by stage 14. Expressed in the founder cells of the cerebral branch within the first tracheal metamere. Outside the CNS, expression is seen in two clusters of ectodermal cells located laterally within the labial and first thoracic segments of stage 9 embryos. By stage 13, the expression is detected in a few cells close to the dorsal midline of the embryos.

It is found in the nucleus. In terms of biological role, plays a regulatory role in neural branching of the tracheae: segment-specific aspects of these neural branching patterns appear to be generated by homeotic regulation of expression. May have a role with oc/otd in the postembryonic development of the brain. This is Homeobox protein unplugged from Drosophila melanogaster (Fruit fly).